The primary structure comprises 359 residues: 3-dehydroquinate synthase (359 aa).

NAD(+) contacts are provided by residues 70–75, 105–109, 129–130, Lys-142, Lys-151, and 169–172; these read DGEQYK, GVIGD, TT, and FYKT. Glu-184, His-247, and His-264 together coordinate Zn(2+).

This sequence belongs to the sugar phosphate cyclases superfamily. Dehydroquinate synthase family. Requires Co(2+) as cofactor. The cofactor is Zn(2+). NAD(+) is required as a cofactor.

Its subcellular location is the cytoplasm. The enzyme catalyses 7-phospho-2-dehydro-3-deoxy-D-arabino-heptonate = 3-dehydroquinate + phosphate. It participates in metabolic intermediate biosynthesis; chorismate biosynthesis; chorismate from D-erythrose 4-phosphate and phosphoenolpyruvate: step 2/7. Catalyzes the conversion of 3-deoxy-D-arabino-heptulosonate 7-phosphate (DAHP) to dehydroquinate (DHQ). In Francisella tularensis subsp. tularensis (strain FSC 198), this protein is 3-dehydroquinate synthase.